A 732-amino-acid chain; its full sequence is MADKITDEYAVGIDPEIYANNPAYSSLFNPYIHKQTIIADHVSVQCHIDLNGIDAVGSKFGNLNAHAGNFTSLCAPNCLPERFALVAYTVEYAFLHDALNQSGMTSVSTRVSDKAQRKSEVQAKIAAEYLRLDPVFGEWFLNKWQTFTACVKDVRSLEFPSLDDYLEFRIVDAAADWTLYNFRWGSGITLTPEEEKIADPMSYVAYAELCLVNDLFSWDKEYASHIKSNGDVPLVNAVHIVAVTQGLTHCAAKAVVQAEVRAHEERFCQLKEQYEATDKPSHEVLRWLRLLEHSMAGNWVWSLCVPRYCKVDRNPYKDHLEKYGSDAVRVLTPLDRLCWPKQEIKDMKQSELKDPSSSTYKSHFSPLEPNPGPEQMRLTISQTQQQRPVLNPYTYINSLPSKNVRQTLIAALNSWYKVPVKSLLIIEGAVNFLHNSSLLLDDIQDGSFLRRGRPVAHQIFGVGQTINTATYLMNEALYLIQMLSPSAVSVYTEIDEMRNLQLGQGRDLYWSYHTHVPTPAQYISMVDGKTGGLFRLISRLMRSEATKNSDLDISQFATLLGRHFQIRDDYQNLQSEDYTKNKGFCDDLDEGKLSFPIILSMQSPGFSNTALSSVFKGSQKGQTLSLEMKQYMLEEITARGAFSETKAVLRKLHTELLRLLIETEKKAGGVENWALRLLIMKLDIAEEKKVAPPKSDSHWGVNQRRAWKGCQKNGRPIDKACFLRAMEETLQK.

The interval 1–311 (MADKITDEYA…SLCVPRYCKV (311 aa)) is terpene cyclase. Aspartate 97 serves as a coordination point for Mg(2+). Residues aspartate 97, 169 to 172 (RIVD), asparagine 213, 217 to 221 (SWDKE), and 307 to 308 (RY) contribute to the substrate site. The DDXXD 1 signature appears at 97–101 (DALNQ). The short motif at 213-221 (NDLFSWDKE) is the NSE/DTE element. A prenyltransferase region spans residues 312 to 732 (DRNPYKDHLE…LRAMEETLQK (421 aa)). The tract at residues 348-370 (KQSELKDPSSSTYKSHFSPLEPN) is disordered. Isopentenyl diphosphate contacts are provided by lysine 402, arginine 405, and histidine 434. Positions 441 and 445 each coordinate Mg(2+). Residues 441–445 (DDIQD) carry the DDXXD 2 motif. Position 450 (arginine 450) interacts with dimethylallyl diphosphate. Arginine 451 provides a ligand contact to isopentenyl diphosphate. 6 residues coordinate dimethylallyl diphosphate: lysine 529, threonine 530, glutamine 565, asparagine 572, lysine 582, and lysine 592.

It in the N-terminal section; belongs to the terpene synthase family. This sequence in the C-terminal section; belongs to the FPP/GGPP synthase family. Hexamer. The cofactor is Mg(2+).

It carries out the reaction isopentenyl diphosphate + (2E,6E)-farnesyl diphosphate = (2E,6E,10E)-geranylgeranyl diphosphate + diphosphate. The protein operates within secondary metabolite biosynthesis; terpenoid biosynthesis. In terms of biological role, bifunctional terpene synthase; part of the gene cluster that mediates the biosynthesis of conidiogenone, a diterpene known to induce the conidiation. The bifunctional terpene synthase PchDS converts isopentenyl diphosphate (IPP) and dimethylallyl diphosphate (DMAPP) into deoxyconidiogenol. The C-terminal prenyltransferase (PT) domain of PchDS catalyzes formation of GGPP, whereas the N-terminal terpene cyclase (TC) domain catalyzes the cyclization of GGPP into deoxyconidiogenol. The cytochrome P450 monooxygenase PchP450 then catalyzes two rounds of oxidation to furnish conidiogenone. This is Conidiogenone synthase from Penicillium rubens (strain ATCC 28089 / DSM 1075 / NRRL 1951 / Wisconsin 54-1255) (Penicillium chrysogenum).